Reading from the N-terminus, the 247-residue chain is MDNQLSDSSDDESPTDDCSDEGEVEHLKDELSQIPFCELQDLKDKIGSKKYNLAIHGIMEERTQGIPDLETKKKKNKGPQELSSKQRVPKLRKVVQVKKKMGRDPRFDDLSGKFNEDLFRKSYSFVNDIRVEEKKSVEKELKKTKNAEKRKNLNDLLKVMNQQERSRKSAEAKRESKKKIKETERELVQKGKKPFYLRKSELKKLELAEKYKELKSKGKLQKYLTKRRKKTASKDRRHVPERRQVDQ.

4 disordered regions span residues 1–29 (MDNQLSDSSDDESPTDDCSDEGEVEHLKD), 62–89 (RTQGIPDLETKKKKNKGPQELSSKQRVP), 136–188 (SVEK…RELV), and 218–247 (GKLQKYLTKRRKKTASKDRRHVPERRQVDQ). Residues 8-23 (SSDDESPTDDCSDEGE) are compositionally biased toward acidic residues. Composition is skewed to basic and acidic residues over residues 136 to 153 (SVEKELKKTKNAEKRKNL) and 164 to 174 (ERSRKSAEAKR). A compositionally biased stretch (basic residues) spans 218 to 240 (GKLQKYLTKRRKKTASKDRRHVP).

The protein belongs to the RRP36 family.

The protein resides in the nucleus. It is found in the nucleolus. Involved in the early processing steps of the pre-rRNA in the maturation pathway leading to the 18S rRNA. This chain is Ribosomal RNA processing protein 36 homolog, found in Nematostella vectensis (Starlet sea anemone).